Consider the following 212-residue polypeptide: Imidazole glycerol phosphate synthase subunit HisH (212 aa).

Residues 3 to 208 form the Glutamine amidotransferase type-1 domain; the sequence is RIVIVDYGMG…GRMVCDLIST (206 aa). Cys81 functions as the Nucleophile in the catalytic mechanism. Catalysis depends on residues His183 and Glu185.

Heterodimer of HisH and HisF.

The protein resides in the cytoplasm. The catalysed reaction is 5-[(5-phospho-1-deoxy-D-ribulos-1-ylimino)methylamino]-1-(5-phospho-beta-D-ribosyl)imidazole-4-carboxamide + L-glutamine = D-erythro-1-(imidazol-4-yl)glycerol 3-phosphate + 5-amino-1-(5-phospho-beta-D-ribosyl)imidazole-4-carboxamide + L-glutamate + H(+). The enzyme catalyses L-glutamine + H2O = L-glutamate + NH4(+). It participates in amino-acid biosynthesis; L-histidine biosynthesis; L-histidine from 5-phospho-alpha-D-ribose 1-diphosphate: step 5/9. IGPS catalyzes the conversion of PRFAR and glutamine to IGP, AICAR and glutamate. The HisH subunit catalyzes the hydrolysis of glutamine to glutamate and ammonia as part of the synthesis of IGP and AICAR. The resulting ammonia molecule is channeled to the active site of HisF. This Symbiobacterium thermophilum (strain DSM 24528 / JCM 14929 / IAM 14863 / T) protein is Imidazole glycerol phosphate synthase subunit HisH.